The sequence spans 569 residues: Endonuclease/exonuclease/phosphatase family domain-containing protein 1 (569 aa).

Positions 1–20 are disordered; the sequence is MGSTLGCHRSIPRDPSDLSH. Gly-2 carries the N-myristoyl glycine lipid modification. The segment covering 11–20 has biased composition (basic and acidic residues); that stretch reads IPRDPSDLSH. Phosphoserine occurs at positions 16, 21, and 25. The region spanning 38–67 is the HhH domain; sequence ERLNINTATEEELMTLPGVTRAVARSIVEY. Ser-106, Ser-110, Ser-160, and Ser-173 each carry phosphoserine. Residues 200–225 form a disordered region; it reads SRPPSTHTNGGLTFTAKPHPSPTSLS. The span at 202–211 shows a compositional bias: polar residues; the sequence is PPSTHTNGGL. Residue Thr-265 is modified to Phosphothreonine. A Phosphoserine modification is found at Ser-428. Residues 545-569 form a disordered region; it reads SKKDAPRNGSGVALERSEANIKHER. Residues 559 to 569 show a composition bias toward basic and acidic residues; sequence ERSEANIKHER.

This chain is Endonuclease/exonuclease/phosphatase family domain-containing protein 1 (EEPD1), found in Homo sapiens (Human).